A 208-amino-acid polypeptide reads, in one-letter code: UPF0301 protein MAB_4928c (208 aa).

The protein belongs to the UPF0301 (AlgH) family.

This is UPF0301 protein MAB_4928c from Mycobacteroides abscessus (strain ATCC 19977 / DSM 44196 / CCUG 20993 / CIP 104536 / JCM 13569 / NCTC 13031 / TMC 1543 / L948) (Mycobacterium abscessus).